The primary structure comprises 760 residues: Rho GTPase-activating protein 26 (760 aa).

A BAR domain is found at 7-262 (EFSECCLDSP…MKENPHEHKN (256 aa)). Residues 265-369 (PYTMEGYLYV…WMEAMDGREP (105 aa)) form the PH domain. In terms of domain architecture, Rho-GAP spans 383 to 568 (AQLDSIGFSI…ILIENHEKIF (186 aa)). Disordered stretches follow at residues 571–617 (VPET…ESRN) and 658–701 (PNRP…SPIS). Over residues 605-617 (HTAQPNEKQESRN) the composition is skewed to polar residues. The span at 674–701 (LSPSWPMFSAPSSPMPTSSTSSDSSPIS) shows a compositional bias: low complexity. The SH3 domain occupies 702 to 760 (SPLRKARALYACKAEHDSELSFTAGTVFDNVHPSQEPGWLEGTLNGKTGLIPENYVEFL).

As to quaternary structure, binds to the C-terminus of PTK2/FAK1. Detected in embryonic brain and liver, and at low levels in embryonic eye, heart, lung, intestine and skeletal muscle.

The protein localises to the cell junction. The protein resides in the focal adhesion. Its subcellular location is the cytoplasm. It is found in the cytoskeleton. It localises to the endosome membrane. Functionally, GTPase-activating protein for RHOA and CDC42. May be involved in the regulation of neosynthesized protein export through a Rab-endososomal dependent export route. This Gallus gallus (Chicken) protein is Rho GTPase-activating protein 26 (ARHGAP26).